The primary structure comprises 271 residues: 3-deoxy-manno-octulosonate cytidylyltransferase (271 aa).

The protein belongs to the KdsB family.

It is found in the cytoplasm. It carries out the reaction 3-deoxy-alpha-D-manno-oct-2-ulosonate + CTP = CMP-3-deoxy-beta-D-manno-octulosonate + diphosphate. Its pathway is nucleotide-sugar biosynthesis; CMP-3-deoxy-D-manno-octulosonate biosynthesis; CMP-3-deoxy-D-manno-octulosonate from 3-deoxy-D-manno-octulosonate and CTP: step 1/1. It functions in the pathway bacterial outer membrane biogenesis; lipopolysaccharide biosynthesis. In terms of biological role, activates KDO (a required 8-carbon sugar) for incorporation into bacterial lipopolysaccharide in Gram-negative bacteria. This chain is 3-deoxy-manno-octulosonate cytidylyltransferase, found in Leptothrix cholodnii (strain ATCC 51168 / LMG 8142 / SP-6) (Leptothrix discophora (strain SP-6)).